The chain runs to 120 residues: Flagellar protein FliT (120 aa).

Positions 1-50 (MERHQHLLSEYQQILTLSEQMLMLATVENWNTLVDLEMTYLKAVENTANI) are required for homodimerization. A fliD binding region spans residues 60–98 (LQELLRQKLRSILENEIEIKRLLQRRLDKLSELVGQSTR).

It belongs to the FliT family. Homodimer. Interacts with FliD and FlhC.

Its subcellular location is the cytoplasm. It is found in the cytosol. Dual-function protein that regulates the transcription of class 2 flagellar operons and that also acts as an export chaperone for the filament-capping protein FliD. As a transcriptional regulator, acts as an anti-FlhDC factor; it directly binds FlhC, thus inhibiting the binding of the FlhC/FlhD complex to class 2 promoters, resulting in decreased expression of class 2 flagellar operons. As a chaperone, effects FliD transition to the membrane by preventing its premature polymerization, and by directing it to the export apparatus. The sequence is that of Flagellar protein FliT from Yersinia pestis (strain Pestoides F).